Consider the following 615-residue polypeptide: Sodium-coupled neutral amino acid transporter 9 homolog (615 aa).

At 1–165 (MPPFFAEFTE…LKDVSGKQGS (165 aa)) the chain is on the cytoplasmic side. A disordered region spans residues 41 to 65 (VDDNDTDPLLDDEPPRRLPPAGGVP). Positions 42–52 (DDNDTDPLLDD) are enriched in acidic residues. The chain crosses the membrane as a helical span at residues 166–186 (IVTIFSIWNTMMGTSLLAMPW). The important for arginine binding and amino acid transport stretch occupies residues 175 to 180 (TMMGTS). The Lumenal segment spans residues 187-192 (ALQQAG). A helical membrane pass occupies residues 193-213 (LVLGIIIMLSMAAICFYTAYI). Residues 214 to 246 (VIESPKRLQDLSVDPLLAEFSDVCKSLFGRIGE) are Cytoplasmic-facing. A helical transmembrane segment spans residues 247-273 (YCAVVFSVCVLIGGVIVYWVLMSNFLY). Topologically, residues 274–341 (YTGAVVYESM…TGDDSWSFDK (68 aa)) are lumenal. 2 N-linked (GlcNAc...) asparagine glycosylation sites follow: Asn286 and Asn295. Residues Cys304 and Cys478 are joined by a disulfide bond. A helical transmembrane segment spans residues 342 to 358 (FWTLRGTVPIYLAFALF). Over 359-367 (PLMNFKSPT) the chain is Cytoplasmic. A helical transmembrane segment spans residues 368 to 392 (FFTKFNVLGTISVMYLLMFVFSKLL). The Lumenal portion of the chain corresponds to 393–413 (ECGVNMDFSNPKSIHYVQLAN). A helical transmembrane segment spans residues 414–434 (MHFPALSGTLTLSYFIHNAVL). The Cytoplasmic segment spans residues 435-451 (TILRNQKHPENNARDLS). Residues 452–472 (IGYCLVAFCYVFIGFTFFAAF) traverse the membrane as a helical segment. The Lumenal segment spans residues 473–491 (PVQRSCISDNFLNNFGAGD). Residues 492-512 (VLSSTARLFLLFQMITVLPLL) traverse the membrane as a helical segment. Residues 513-533 (MFLVRSQLFYAIFGQTWPGAI) lie on the Cytoplasmic side of the membrane. Residues 534-554 (RVIILNVLLIAVAVGFATFYP) form a helical membrane-spanning segment. Residues 555–561 (NVGSILR) lie on the Lumenal side of the membrane. A helical transmembrane segment spans residues 562–582 (YVGSISGLVYVFALPAMVYIK). At 583–594 (QSEAAGTLTPMK) the chain is on the cytoplasmic side. Residues 595 to 615 (KYAHYGIIVIGVANLIAQFVI) form a helical membrane-spanning segment.

The protein belongs to the amino acid/polyamine transporter 2 family. SLC38A9 subfamily.

Its subcellular location is the lysosome membrane. It is found in the late endosome membrane. With respect to regulation, amino acid transport is sodium-dependent. Transport of leucine, tyrosine and phenylalanine is increased by arginine binding. Lysosomal amino acid transporter involved in the activation of mTORC1 in response to amino acid levels. Probably acts as an amino acid sensor of the Rag GTPases and Ragulator complexes, 2 complexes involved in amino acid sensing and activation of mTORC1, a signaling complex promoting cell growth in response to growth factors, energy levels, and amino acids. This is Sodium-coupled neutral amino acid transporter 9 homolog from Caenorhabditis elegans.